Reading from the N-terminus, the 34-residue chain is Beta/mu-theraphotoxin-Pe1b (34 aa).

3 disulfides stabilise this stretch: Cys2–Cys16, Cys9–Cys21, and Cys15–Cys28.

The protein belongs to the neurotoxin 10 (Hwtx-1) family. 54 (ProTx-1) subfamily. As to expression, expressed by the venom gland.

The protein resides in the secreted. Ion channel impairing toxin that inhibits several voltage-gated sodium channels. It acts by inhibiting the inward component of the sodium current and by shifting the voltage dependence of channel activation to more depolarized potentials. Its most potent activity is on Nav1.7/SCN9A (IC(50)=167 nM), followed by Nav1.6/SCN8A (IC(50)=696 nM), and Nav1.2/SCN2A (IC(50)=3.54 uM). This Phormingochilus everetti (Malaysian purple earth tiger tarantula) protein is Beta/mu-theraphotoxin-Pe1b.